The chain runs to 230 residues: UPF0173 metal-dependent hydrolase LI0883 (230 aa).

Belongs to the UPF0173 family.

In Lawsonia intracellularis (strain PHE/MN1-00), this protein is UPF0173 metal-dependent hydrolase LI0883.